A 224-amino-acid polypeptide reads, in one-letter code: Cytidylate kinase (224 aa).

14-22 serves as a coordination point for ATP; sequence GPAGSGKST.

This sequence belongs to the cytidylate kinase family. Type 1 subfamily.

Its subcellular location is the cytoplasm. It carries out the reaction CMP + ATP = CDP + ADP. It catalyses the reaction dCMP + ATP = dCDP + ADP. In Mycoplasmoides gallisepticum (strain R(low / passage 15 / clone 2)) (Mycoplasma gallisepticum), this protein is Cytidylate kinase.